A 219-amino-acid chain; its full sequence is Endonuclease III (219 aa).

The HhH domain occupies 109 to 128 (RDELVKLPGVGRKTANVVVS). Residues Cys189, Cys196, Cys199, and Cys205 each coordinate [4Fe-4S] cluster.

The protein belongs to the Nth/MutY family. [4Fe-4S] cluster is required as a cofactor.

The enzyme catalyses 2'-deoxyribonucleotide-(2'-deoxyribose 5'-phosphate)-2'-deoxyribonucleotide-DNA = a 3'-end 2'-deoxyribonucleotide-(2,3-dehydro-2,3-deoxyribose 5'-phosphate)-DNA + a 5'-end 5'-phospho-2'-deoxyribonucleoside-DNA + H(+). DNA repair enzyme that has both DNA N-glycosylase activity and AP-lyase activity. The DNA N-glycosylase activity releases various damaged pyrimidines from DNA by cleaving the N-glycosidic bond, leaving an AP (apurinic/apyrimidinic) site. The AP-lyase activity cleaves the phosphodiester bond 3' to the AP site by a beta-elimination, leaving a 3'-terminal unsaturated sugar and a product with a terminal 5'-phosphate. The sequence is that of Endonuclease III from Bacillus subtilis (strain 168).